The primary structure comprises 93 residues: Small ribosomal subunit protein uS19 (93 aa).

2 disordered regions span residues 1–24 (MPRSLKKGPFVDDHLQKKVDAQNE) and 73–93 (EFAPTRTFKGHEKDDRKGRRR). Composition is skewed to basic and acidic residues over residues 9 to 21 (PFVDDHLQKKVDA) and 81 to 93 (KGHEKDDRKGRRR).

This sequence belongs to the universal ribosomal protein uS19 family.

Functionally, protein S19 forms a complex with S13 that binds strongly to the 16S ribosomal RNA. The chain is Small ribosomal subunit protein uS19 from Kineococcus radiotolerans (strain ATCC BAA-149 / DSM 14245 / SRS30216).